Consider the following 102-residue polypeptide: Integration host factor subunit beta (102 aa).

Belongs to the bacterial histone-like protein family. Heterodimer of an alpha and a beta chain.

Its function is as follows. This protein is one of the two subunits of integration host factor, a specific DNA-binding protein that functions in genetic recombination as well as in transcriptional and translational control. This is Integration host factor subunit beta from Rhizobium rhizogenes (strain K84 / ATCC BAA-868) (Agrobacterium radiobacter).